A 149-amino-acid polypeptide reads, in one-letter code: Nucleoside diphosphate kinase (149 aa).

Lysine 9, phenylalanine 57, arginine 85, threonine 91, arginine 102, and asparagine 112 together coordinate ATP. The Pros-phosphohistidine intermediate role is filled by histidine 115.

It belongs to the NDK family. In terms of assembly, homotetramer. Mg(2+) is required as a cofactor.

It localises to the cytoplasm. It catalyses the reaction a 2'-deoxyribonucleoside 5'-diphosphate + ATP = a 2'-deoxyribonucleoside 5'-triphosphate + ADP. The enzyme catalyses a ribonucleoside 5'-diphosphate + ATP = a ribonucleoside 5'-triphosphate + ADP. In terms of biological role, major role in the synthesis of nucleoside triphosphates other than ATP. The ATP gamma phosphate is transferred to the NDP beta phosphate via a ping-pong mechanism, using a phosphorylated active-site intermediate. The sequence is that of Nucleoside diphosphate kinase from Synechocystis sp. (strain ATCC 27184 / PCC 6803 / Kazusa).